The primary structure comprises 133 residues: Small ribosomal subunit protein uS8 (133 aa).

It belongs to the universal ribosomal protein uS8 family. As to quaternary structure, part of the 30S ribosomal subunit. Contacts proteins S5 and S12.

In terms of biological role, one of the primary rRNA binding proteins, it binds directly to 16S rRNA central domain where it helps coordinate assembly of the platform of the 30S subunit. The polypeptide is Small ribosomal subunit protein uS8 (Protochlamydia amoebophila (strain UWE25)).